The primary structure comprises 213 residues: MKDTPKHQGLRNQLVTVLQQKGITNKNILEAISKIPRHLFLNSSFEDYAYQDLAFPIGAGQTISQPYTVAFQTELLEVKKGDKVLEIGTGSGYQTAVLCMVGAVVYSVERQNELFKKTSLLLPKLGIRAKHLSFGDGYKGLPNYAPFDSIIVTAGAPEIPKALMAQLKIGGKLVIPVGENSQIMTLIIRKDETQFEKHEFGDFKFVPLLEDKN.

Residue Ser64 is part of the active site.

Belongs to the methyltransferase superfamily. L-isoaspartyl/D-aspartyl protein methyltransferase family.

It is found in the cytoplasm. The catalysed reaction is [protein]-L-isoaspartate + S-adenosyl-L-methionine = [protein]-L-isoaspartate alpha-methyl ester + S-adenosyl-L-homocysteine. In terms of biological role, catalyzes the methyl esterification of L-isoaspartyl residues in peptides and proteins that result from spontaneous decomposition of normal L-aspartyl and L-asparaginyl residues. It plays a role in the repair and/or degradation of damaged proteins. The protein is Protein-L-isoaspartate O-methyltransferase of Flavobacterium psychrophilum (strain ATCC 49511 / DSM 21280 / CIP 103535 / JIP02/86).